The primary structure comprises 92 residues: Precursor of elicitor peptide 1 (92 aa).

The propeptide occupies 1-69; it reads MEKSDRRSEE…EKEEVVVTSR (69 aa). The segment at 35–92 is disordered; the sequence is HQDSPTTSSPGTSKQPKEEKEDVTMEKEEVVVTSRATKVKAKQRGKEKVSSGRPGQHN. The segment covering 37–48 has biased composition (polar residues); sequence DSPTTSSPGTSK. Positions 49–64 are enriched in basic and acidic residues; sequence QPKEEKEDVTMEKEEV.

This sequence belongs to the brassicaceae elicitor peptide family. In terms of assembly, interacts with its receptor PEPR1.

Functionally, elicitor of plant defense. Induces the production of plant defensin (PDF1.2) and of H(2)O(2). Promotes resistance to the root fungal pathogen P.irregulare. Triggers the expression of several PROSCOOP genes (e.g. PROSCOOP2, PROSCOOP7, PROSCOOP8, PROSCOOP12 and PROSCOOP13). The protein is Precursor of elicitor peptide 1 of Arabidopsis thaliana (Mouse-ear cress).